The chain runs to 1002 residues: UPF0182 protein Mvan_1814 (1002 aa).

7 helical membrane passes run 16 to 36 (VMIA…RLVD), 61 to 81 (LLLF…AMAL), 112 to 132 (LVGI…AQNY), 174 to 194 (FAAT…FGGI), 209 to 229 (IQLI…YWLD), 258 to 278 (KLIL…AIVL), and 286 to 306 (IGVV…PLVV). The tract at residues 891 to 958 (LFGPGADATA…TGPTQLSAGK (68 aa)) is disordered. The segment covering 893-923 (GPGADATATGPAATEPPAGQAPQPQGNNQPP) has biased composition (low complexity). The span at 937–950 (PQQPEVPVAVPPTG) shows a compositional bias: pro residues.

Belongs to the UPF0182 family.

The protein localises to the cell membrane. The protein is UPF0182 protein Mvan_1814 of Mycolicibacterium vanbaalenii (strain DSM 7251 / JCM 13017 / BCRC 16820 / KCTC 9966 / NRRL B-24157 / PYR-1) (Mycobacterium vanbaalenii).